A 441-amino-acid polypeptide reads, in one-letter code: DNA-binding protein (441 aa).

Residues 1–18 are compositionally biased toward basic residues; the sequence is MERTPKRAHGFRSTKPVK. The tract at residues 1 to 85 is disordered; the sequence is MERTPKRAHG…EESPEAPLSD (85 aa). Composition is skewed to acidic residues over residues 24 to 33 and 67 to 79; these read MMEEEEEEVE and VDDE…EESP. Residues C191 and H193 each contribute to the Zn(2+) site. A flexible loop region spans residues 204-236; sequence VELNPSSEAGKRALAEQNGVIEKNRFGRQVVVL. Residues C244, C262, C305, C307, C359, and C380 each coordinate Zn(2+). Residues 426-441 are C-terminal arm, DBP binding; the sequence is EVLAPVSPIASDDPFA.

It belongs to the adenoviridae E2A DNA-binding protein family. Homomultimerizes on viral ssDNA bound to pTP. Forms a initiation complex with viral polymerase, pTP and hosts NFIA and POU2F1/OCT1. Interacts with host SRCAP.

The protein resides in the host nucleus. Functionally, plays a role in the elongation phase of viral strand displacement replication by unwinding the template in an ATP-independent fashion, employing its capacity to form multimers. Also enhances the rate of initiation. Released from template upon second strand synthesis. Assembles in complex with viral pTP, viral pol, host NFIA and host POU2F1/OCT1 on viral origin of replication. Covers the whole ssDNA genome during synthesis. The complementary strand synthesis induces its relese from DNA template. May inhibit cellular transcription mediated by the interaction between host SRCAP and CBP. The chain is DNA-binding protein from Fowl adenovirus A serotype 1 (strain CELO / Phelps) (FAdV-1).